Here is a 131-residue protein sequence, read N- to C-terminus: Large ribosomal subunit protein bL17 (131 aa).

This sequence belongs to the bacterial ribosomal protein bL17 family. As to quaternary structure, part of the 50S ribosomal subunit. Contacts protein L32.

The polypeptide is Large ribosomal subunit protein bL17 (Thermotoga sp. (strain RQ2)).